We begin with the raw amino-acid sequence, 191 residues long: Elongation factor P (191 aa).

The protein belongs to the elongation factor P family.

Its subcellular location is the cytoplasm. The protein operates within protein biosynthesis; polypeptide chain elongation. Its function is as follows. Involved in peptide bond synthesis. Stimulates efficient translation and peptide-bond synthesis on native or reconstituted 70S ribosomes in vitro. Probably functions indirectly by altering the affinity of the ribosome for aminoacyl-tRNA, thus increasing their reactivity as acceptors for peptidyl transferase. In Bartonella tribocorum (strain CIP 105476 / IBS 506), this protein is Elongation factor P.